The sequence spans 293 residues: Ribosomal protein L11 methyltransferase (293 aa).

Positions 145, 166, 188, and 230 each coordinate S-adenosyl-L-methionine.

The protein belongs to the methyltransferase superfamily. PrmA family.

The protein resides in the cytoplasm. The catalysed reaction is L-lysyl-[protein] + 3 S-adenosyl-L-methionine = N(6),N(6),N(6)-trimethyl-L-lysyl-[protein] + 3 S-adenosyl-L-homocysteine + 3 H(+). Functionally, methylates ribosomal protein L11. The polypeptide is Ribosomal protein L11 methyltransferase (Salmonella arizonae (strain ATCC BAA-731 / CDC346-86 / RSK2980)).